Consider the following 363-residue polypeptide: DNA replication and repair protein RecF (363 aa).

An ATP-binding site is contributed by 30-37 (GPNGSGKT).

It belongs to the RecF family.

It localises to the cytoplasm. Functionally, the RecF protein is involved in DNA metabolism; it is required for DNA replication and normal SOS inducibility. RecF binds preferentially to single-stranded, linear DNA. It also seems to bind ATP. This chain is DNA replication and repair protein RecF, found in Chlorobium limicola (strain DSM 245 / NBRC 103803 / 6330).